A 332-amino-acid chain; its full sequence is Formamidase (332 aa).

The CN hydrolase domain maps to 14–259 (FLTALIQYPV…WEIVTAEVYP (246 aa)). The active-site Proton acceptor is the Glu-60. Lys-132 acts as the Proton donor in catalysis. The active-site Nucleophile is Cys-165.

It belongs to the carbon-nitrogen hydrolase superfamily. Aliphatic amidase family.

The enzyme catalyses formamide + H2O = formate + NH4(+). Its function is as follows. Is an aliphatic amidase with a restricted substrate specificity, as it only hydrolyzes formamide. The polypeptide is Formamidase (Bacillus cereus (strain ZK / E33L)).